The chain runs to 68 residues: Small ribosomal subunit protein bS21 (68 aa).

The protein belongs to the bacterial ribosomal protein bS21 family.

The protein is Small ribosomal subunit protein bS21 of Ruegeria sp. (strain TM1040) (Silicibacter sp.).